Reading from the N-terminus, the 363-residue chain is Putative glutamate--cysteine ligase 2 (363 aa).

This sequence belongs to the glutamate--cysteine ligase type 2 family. YbdK subfamily.

The catalysed reaction is L-cysteine + L-glutamate + ATP = gamma-L-glutamyl-L-cysteine + ADP + phosphate + H(+). ATP-dependent carboxylate-amine ligase which exhibits weak glutamate--cysteine ligase activity. The chain is Putative glutamate--cysteine ligase 2 from Streptomyces coelicolor (strain ATCC BAA-471 / A3(2) / M145).